A 647-amino-acid polypeptide reads, in one-letter code: Shugoshin-2 (647 aa).

Residue serine 7 is modified to Phosphoserine. Coiled-coil stretches lie at residues 28–87 and 125–145; these read SKAQ…FHEE and DEESVVKDTEEIIEQAQHDVS. The segment at 171–295 is disordered; it reads REANVFSDTQ…DTVIQSTPTK (125 aa). Low complexity predominate over residues 200–210; the sequence is NLSNSKPVNNN. Serine 240 carries the post-translational modification Phosphoserine. 2 stretches are compositionally biased toward polar residues: residues 242-253 and 282-293; these read KSLSNKINNQAA and RIQSDTVIQSTP. Threonine 292 carries the post-translational modification Phosphothreonine. Phosphoserine occurs at positions 332 and 335. Polar residues-rich tracts occupy residues 375 to 396 and 462 to 478; these read SLTSQENVGPQVTTTSLSNMTV and EPPSSNGFSIAHPNNSP. 4 disordered regions span residues 375 to 416, 453 to 486, 522 to 579, and 593 to 647; these read SLTS…DSSV, RNPPMRLSSEPPSSNGFSIAHPNNSPLRPPSLQG, TNLK…ERKK, and RNFD…TLNL. Composition is skewed to basic and acidic residues over residues 528-541 and 593-602; these read NENDRVTKTQSRRE and RNFDLPSDHV. The segment covering 621–647 has biased composition (polar residues); that stretch reads KTETANITSEAPTTSEVTLENSETLNL.

The protein belongs to the shugoshin family.

It localises to the chromosome. Its subcellular location is the centromere. Its function is as follows. Involved in chromosome cohesion during mitosis and meiosis by preventing premature dissociation of cohesin complex from centromeres after prophase, when most of cohesin complex dissociates from chromosomes arms. Required for faithful mitotic chromosome segregation and proper kinetochore orientation during meiosis I. In contrast to sgo1, it is dispensable for centromeric protection of rec8 during meiosis I as well as protection of rad21 during mitosis. Required to sense the lack of tension at centromeres during mitosis. The sequence is that of Shugoshin-2 (sgo2) from Schizosaccharomyces pombe (strain 972 / ATCC 24843) (Fission yeast).